The following is a 145-amino-acid chain: MLRLVRSSRAFHTSLIRAGTQANINPVAGKTADEVDVKIEPIPRHGEETETKRARLLYQSRKRGILETDLLLSRYAKLYLKDMTREELEEYDKLLDEPDWDIFYWATRNDNIKPCPERWAKSPVMEKLRELAENKEREVLRMPDL.

This sequence belongs to the SDHAF2 family. In terms of assembly, interacts with the flavoprotein subunit within the SDH catalytic dimer.

It is found in the mitochondrion matrix. Plays an essential role in the assembly of succinate dehydrogenase (SDH), an enzyme complex (also referred to as respiratory complex II) that is a component of both the tricarboxylic acid (TCA) cycle and the mitochondrial electron transport chain, and which couples the oxidation of succinate to fumarate with the reduction of ubiquinone (coenzyme Q) to ubiquinol. Required for flavinylation (covalent attachment of FAD) of the flavoprotein subunit of the SDH catalytic dimer. The protein is Succinate dehydrogenase assembly factor 2, mitochondrial of Yarrowia lipolytica (strain CLIB 122 / E 150) (Yeast).